A 619-amino-acid polypeptide reads, in one-letter code: Zinc finger and BTB domain-containing protein 7C (619 aa).

Positions 34 to 101 constitute a BTB domain; it reads CDVLLVVQEQ…AYTSTLTITA (68 aa). The interval 129–218 is disordered; sequence PGGDGGEEDD…DSFQAGSPGH (90 aa). Over residues 133–173 the composition is skewed to acidic residues; it reads GGEEDDKEDDDDDEDDDDEEDEEEEEEEEEDDDDDTEDFAD. Basic and acidic residues predominate over residues 191–208; sequence KTDHLTEKAYSDTPRDFP. 3 consecutive C2H2-type zinc fingers follow at residues 364–386, 392–414, and 420–442; these read QQCP…MRTH, YMCT…MRKH, and YLCI…MRIH. The segment at 448-478 adopts a C2H2-type 4; degenerate zinc-finger fold; sequence YQCEFCYKSFTRSDHLHRHIKRQSCRMARPR.

In terms of tissue distribution, detected in normal cervical keratinocytes, and in some cervical carcinoma cell lines.

In terms of biological role, may be a tumor suppressor gene. This is Zinc finger and BTB domain-containing protein 7C (ZBTB7C) from Homo sapiens (Human).